A 585-amino-acid polypeptide reads, in one-letter code: Glutamine--tRNA ligase (585 aa).

The 'HIGH' region motif lies at 51–61 (PEPNGYLHIGH). Residues 52-54 (EPN) and 58-64 (HIGHAKS) contribute to the ATP site. Residues D84 and Y238 each coordinate L-glutamine. ATP is bound by residues T257 and 292 to 293 (RL). A 'KMSKS' region motif is present at residues 299–303 (ITSKR).

This sequence belongs to the class-I aminoacyl-tRNA synthetase family. In terms of assembly, monomer.

The protein resides in the cytoplasm. It carries out the reaction tRNA(Gln) + L-glutamine + ATP = L-glutaminyl-tRNA(Gln) + AMP + diphosphate. The polypeptide is Glutamine--tRNA ligase (Cupriavidus necator (strain ATCC 17699 / DSM 428 / KCTC 22496 / NCIMB 10442 / H16 / Stanier 337) (Ralstonia eutropha)).